A 400-amino-acid polypeptide reads, in one-letter code: Aspartate aminotransferase (400 aa).

L-aspartate contacts are provided by glycine 37, tryptophan 126, and asparagine 176. Lysine 238 carries the post-translational modification N6-(pyridoxal phosphate)lysine. Arginine 367 is a binding site for L-aspartate.

The protein belongs to the class-I pyridoxal-phosphate-dependent aminotransferase family. As to quaternary structure, homodimer. Pyridoxal 5'-phosphate serves as cofactor.

Its subcellular location is the cytoplasm. The catalysed reaction is L-aspartate + 2-oxoglutarate = oxaloacetate + L-glutamate. Its function is as follows. Catalyzes the reversible conversion of aspartate and 2-oxoglutarate to glutamate and oxaloacetate. Has very weak prephenate aminotransferase activity. The chain is Aspartate aminotransferase from Musicola paradisiaca (strain Ech703) (Dickeya paradisiaca).